We begin with the raw amino-acid sequence, 312 residues long: Small ribosomal subunit protein uS2m (312 aa).

Belongs to the universal ribosomal protein uS2 family.

The protein localises to the mitochondrion. The polypeptide is Small ribosomal subunit protein uS2m (RPS2) (Acanthamoeba castellanii (Amoeba)).